Here is a 44-residue protein sequence, read N- to C-terminus: Defensin-like protein 1 (44 aa).

Pyrrolidone carboxylic acid is present on glutamine 1. Residues cysteine 15 and cysteine 36 are joined by a disulfide bond.

Belongs to the DEFL family. Forms oligomers in its native state.

The protein resides in the secreted. In terms of biological role, possesses antifungal activity sensitive to inorganic cations. The protein is Defensin-like protein 1 (AFP1) of Brassica napus (Rape).